The primary structure comprises 384 residues: S-adenosylmethionine synthase (384 aa).

Histidine 15 provides a ligand contact to ATP. Residue aspartate 17 coordinates Mg(2+). A K(+)-binding site is contributed by glutamate 43. Residues glutamate 56 and glutamine 99 each coordinate L-methionine. The tract at residues 99–109 (QSADINQGVDR) is flexible loop. Residues 164–166 (DAK), 230–231 (RF), aspartate 239, 245–246 (RK), alanine 262, and lysine 266 each bind ATP. Aspartate 239 is an L-methionine binding site. Lysine 270 provides a ligand contact to L-methionine.

It belongs to the AdoMet synthase family. In terms of assembly, homotetramer; dimer of dimers. Mg(2+) is required as a cofactor. K(+) serves as cofactor.

The protein resides in the cytoplasm. The enzyme catalyses L-methionine + ATP + H2O = S-adenosyl-L-methionine + phosphate + diphosphate. It functions in the pathway amino-acid biosynthesis; S-adenosyl-L-methionine biosynthesis; S-adenosyl-L-methionine from L-methionine: step 1/1. In terms of biological role, catalyzes the formation of S-adenosylmethionine (AdoMet) from methionine and ATP. The overall synthetic reaction is composed of two sequential steps, AdoMet formation and the subsequent tripolyphosphate hydrolysis which occurs prior to release of AdoMet from the enzyme. The sequence is that of S-adenosylmethionine synthase from Haemophilus influenzae (strain PittEE).